The primary structure comprises 314 residues: Ribosomal RNA small subunit methyltransferase H (314 aa).

S-adenosyl-L-methionine-binding positions include 58 to 60, Asp76, Phe103, Asp119, and Gln126; that span reads GGH.

It belongs to the methyltransferase superfamily. RsmH family.

Its subcellular location is the cytoplasm. It carries out the reaction cytidine(1402) in 16S rRNA + S-adenosyl-L-methionine = N(4)-methylcytidine(1402) in 16S rRNA + S-adenosyl-L-homocysteine + H(+). Functionally, specifically methylates the N4 position of cytidine in position 1402 (C1402) of 16S rRNA. The polypeptide is Ribosomal RNA small subunit methyltransferase H (Gloeobacter violaceus (strain ATCC 29082 / PCC 7421)).